A 341-amino-acid chain; its full sequence is 33 kDa chaperonin (341 aa).

Disulfide bonds link C245/C247 and C278/C281.

This sequence belongs to the HSP33 family. In terms of processing, under oxidizing conditions two disulfide bonds are formed involving the reactive cysteines. Under reducing conditions zinc is bound to the reactive cysteines and the protein is inactive.

The protein localises to the cytoplasm. Its function is as follows. Redox regulated molecular chaperone. Protects both thermally unfolding and oxidatively damaged proteins from irreversible aggregation. Plays an important role in the bacterial defense system toward oxidative stress. The polypeptide is 33 kDa chaperonin (Thermus thermophilus (strain ATCC BAA-163 / DSM 7039 / HB27)).